The following is a 185-amino-acid chain: UPF0200 protein TON_1344 (185 aa).

7 to 14 serves as a coordination point for ATP; sequence GMPGSGKS.

The protein belongs to the UPF0200 family.

The chain is UPF0200 protein TON_1344 from Thermococcus onnurineus (strain NA1).